A 241-amino-acid polypeptide reads, in one-letter code: Uridylate kinase (241 aa).

Residue 9-10 coordinates ATP; it reads GS. Glycine 44 is a UMP binding site. The ATP site is built by glycine 45 and arginine 49. Residues aspartate 66 and 114 to 120 each bind UMP; that span reads VVAGQTT. ATP-binding residues include threonine 140, phenylalanine 146, and aspartate 149.

Belongs to the UMP kinase family. As to quaternary structure, homohexamer.

Its subcellular location is the cytoplasm. The catalysed reaction is UMP + ATP = UDP + ADP. It functions in the pathway pyrimidine metabolism; CTP biosynthesis via de novo pathway; UDP from UMP (UMPK route): step 1/1. Its activity is regulated as follows. Inhibited by UTP. Its function is as follows. Catalyzes the reversible phosphorylation of UMP to UDP. This Halobacterium salinarum (strain ATCC 29341 / DSM 671 / R1) protein is Uridylate kinase.